A 327-amino-acid polypeptide reads, in one-letter code: Undecaprenyl-phosphate 4-deoxy-4-formamido-L-arabinose transferase (327 aa).

Residues 1–235 (MFDAAPIKKV…TCLTTTPLRL (235 aa)) are Cytoplasmic-facing. The chain crosses the membrane as a helical span at residues 236–256 (LSLLGSVIAIGGFSLSVLLIV). Residues 257–269 (LRLALGPQWAAEG) are Periplasmic-facing. A helical transmembrane segment spans residues 270 to 290 (VFMLFAVLFTFIGAQFIGMGL). Over 291 to 327 (LGEYIGRIYNDVRARPRYFVQQVIYPESTPFTEESHQ) the chain is Cytoplasmic.

The protein belongs to the glycosyltransferase 2 family.

It localises to the cell inner membrane. The enzyme catalyses UDP-4-deoxy-4-formamido-beta-L-arabinose + di-trans,octa-cis-undecaprenyl phosphate = 4-deoxy-4-formamido-alpha-L-arabinopyranosyl di-trans,octa-cis-undecaprenyl phosphate + UDP. It participates in glycolipid biosynthesis; 4-amino-4-deoxy-alpha-L-arabinose undecaprenyl phosphate biosynthesis; 4-amino-4-deoxy-alpha-L-arabinose undecaprenyl phosphate from UDP-4-deoxy-4-formamido-beta-L-arabinose and undecaprenyl phosphate: step 1/2. Its pathway is bacterial outer membrane biogenesis; lipopolysaccharide biosynthesis. Functionally, catalyzes the transfer of 4-deoxy-4-formamido-L-arabinose from UDP to undecaprenyl phosphate. The modified arabinose is attached to lipid A and is required for resistance to polymyxin and cationic antimicrobial peptides. In Salmonella choleraesuis (strain SC-B67), this protein is Undecaprenyl-phosphate 4-deoxy-4-formamido-L-arabinose transferase.